The following is a 372-amino-acid chain: NAD(P)H-quinone oxidoreductase subunit 1 (372 aa).

The next 8 helical transmembrane spans lie at 27 to 47, 97 to 117, 128 to 148, 176 to 196, 204 to 224, 266 to 286, 308 to 328, and 347 to 367; these read IIWLPLPMLLVLVAAVVGVLV, ILFTAGPILVLVPVILSWLIV, VGIGIFLWIALSSIQPIGLLM, LALSVLAIVLMTNSLSTIDIV, ILSWNIWRQPVGFIVFWICAL, ILSALLVSILYLGGWGFPVPV, SIGIVMTVLKAYLLVFIAILL, and FLLPISLANLLITAGLKLAFP.

It belongs to the complex I subunit 1 family. In terms of assembly, NDH-1 is composed of at least 11 different subunits.

The protein localises to the cellular thylakoid membrane. It carries out the reaction a plastoquinone + NADH + (n+1) H(+)(in) = a plastoquinol + NAD(+) + n H(+)(out). It catalyses the reaction a plastoquinone + NADPH + (n+1) H(+)(in) = a plastoquinol + NADP(+) + n H(+)(out). In terms of biological role, NDH-1 shuttles electrons from an unknown electron donor, via FMN and iron-sulfur (Fe-S) centers, to quinones in the respiratory and/or the photosynthetic chain. The immediate electron acceptor for the enzyme in this species is believed to be plastoquinone. Couples the redox reaction to proton translocation, and thus conserves the redox energy in a proton gradient. The sequence is that of NAD(P)H-quinone oxidoreductase subunit 1 from Prochlorococcus marinus (strain AS9601).